The following is a 166-amino-acid chain: Photosystem I assembly protein Ycf3 (166 aa).

TPR repeat units lie at residues 35-68 (AFTY…EIDP), 72-105 (SYIL…NPSL), and 120-153 (GEQA…APTN).

Belongs to the Ycf3 family.

It is found in the plastid. The protein resides in the chloroplast thylakoid membrane. Functionally, essential for the assembly of the photosystem I (PSI) complex. May act as a chaperone-like factor to guide the assembly of the PSI subunits. This is Photosystem I assembly protein Ycf3 from Oltmannsiellopsis viridis (Marine flagellate).